We begin with the raw amino-acid sequence, 278 residues long: Release factor glutamine methyltransferase (278 aa).

S-adenosyl-L-methionine-binding positions include 116–120 (GTGTG), Asp-139, Trp-168, and Asn-182. 182–185 (NPPY) lines the substrate pocket.

This sequence belongs to the protein N5-glutamine methyltransferase family. PrmC subfamily.

The catalysed reaction is L-glutaminyl-[peptide chain release factor] + S-adenosyl-L-methionine = N(5)-methyl-L-glutaminyl-[peptide chain release factor] + S-adenosyl-L-homocysteine + H(+). In terms of biological role, methylates the class 1 translation termination release factors RF1/PrfA and RF2/PrfB on the glutamine residue of the universally conserved GGQ motif. This Cereibacter sphaeroides (strain ATCC 17023 / DSM 158 / JCM 6121 / CCUG 31486 / LMG 2827 / NBRC 12203 / NCIMB 8253 / ATH 2.4.1.) (Rhodobacter sphaeroides) protein is Release factor glutamine methyltransferase.